The chain runs to 129 residues: Small ribosomal subunit protein uS11 (129 aa).

Belongs to the universal ribosomal protein uS11 family. As to quaternary structure, part of the 30S ribosomal subunit. Interacts with proteins S7 and S18. Binds to IF-3.

In terms of biological role, located on the platform of the 30S subunit, it bridges several disparate RNA helices of the 16S rRNA. Forms part of the Shine-Dalgarno cleft in the 70S ribosome. This is Small ribosomal subunit protein uS11 from Bacillus cytotoxicus (strain DSM 22905 / CIP 110041 / 391-98 / NVH 391-98).